Here is a 111-residue protein sequence, read N- to C-terminus: Small ribosomal subunit protein bS6 (111 aa).

Belongs to the bacterial ribosomal protein bS6 family.

Its function is as follows. Binds together with bS18 to 16S ribosomal RNA. This Francisella philomiragia subsp. philomiragia (strain ATCC 25017 / CCUG 19701 / FSC 153 / O#319-036) protein is Small ribosomal subunit protein bS6.